Here is a 2038-residue protein sequence, read N- to C-terminus: Homeotic protein female sterile (2038 aa).

Positions 34-140 (RNTNQLQYLI…KVFLQKIESM (107 aa)) constitute a Bromo 1 domain. Residues 145–284 (LELEPVTAKG…TTAMAGGVGG (140 aa)) form a disordered region. Low complexity-rich tracts occupy residues 177–209 (GSGT…SGLQ) and 268–279 (PGSTNTTTTAMA). Residues 330–350 (AAVAAAAAAAAAAAAAAGGAA) form a helical membrane-spanning segment. The tract at residues 396–432 (KGVKRKADTTTPTANAFESPYTQMDSKSAKIATRRES) is disordered. Positions 404–421 (TTTPTANAFESPYTQMDS) are enriched in polar residues. The chain crosses the membrane as a helical span at residues 451-471 (VSGVPGLGGLVAGGVAGVAVA). Phosphoserine is present on serine 452. The region spanning 475–584 (EKLSDALKSC…DVFEMRYANI (110 aa)) is the Bromo 2 domain. Disordered regions lie at residues 590-655 (ANAA…ERSA) and 677-735 (EASA…SVPG). The span at 593 to 619 (AHHHGHGHGHGHGHGHGHGHGHGHGHG) shows a compositional bias: basic residues. Residues 636–649 (SSEDSSDTENESNS) are compositionally biased toward acidic residues. Positions 681–694 (KKKAKKKLKEKKKS) are enriched in basic residues. Residues 711–735 (TGGGANAGGAGGPGSGGHGSVSVPG) show a composition bias toward gly residues. Transmembrane regions (helical) follow at residues 750–770 (LNAL…AGGV), 790–810 (MAGG…AAGA), and 816–830 (AGTL…AAAG). 10 disordered regions span residues 832 to 858 (GGTT…SGAG), 891 to 956 (AGAA…SYDE), 1016 to 1139 (CLRK…GGNL), 1217 to 1260 (AVSA…ATVA), 1384 to 1416 (QPAG…QQQQ), 1502 to 1530 (MQQM…QQQH), 1580 to 1616 (IESM…PNAA), 1645 to 1728 (WSSL…VAQA), 1745 to 1918 (AAAA…SGAI), and 1957 to 2023 (MESG…GQID). The helical transmembrane segment at 874–894 (GAAGAAAGAGSVGGVGGAGAA) threads the bilayer. Residues 910-927 (GAGGGVGGANASAGGAGA) are compositionally biased toward gly residues. One can recognise an NET domain in the interval 942 to 1024 (DSEEEDTAKP…SCLRKKTHKK (83 aa)). At serine 943 the chain carries Phosphoserine. Residues 1017–1027 (LRKKTHKKPSG) are compositionally biased toward basic residues. A compositionally biased stretch (basic and acidic residues) spans 1028 to 1046 (KSKDEQMAEKKQELEKRLQ). Positions 1079–1100 (SSSSSSSDSSSSSSSDSSSSDS) are enriched in low complexity. Polar residues-rich tracts occupy residues 1121 to 1131 (SNGSNVNNPSI) and 1222 to 1232 (TGQQHNKNGPN). The segment covering 1645–1665 (WSSLASANSPQSHTSSSSSSS) has biased composition (low complexity). Position 1653 is a phosphoserine (serine 1653). The span at 1680–1708 (KAKERDRLKLLEAAEKEKKNQKEAAEKEQ) shows a compositional bias: basic and acidic residues. Low complexity-rich tracts occupy residues 1716–1728 (SSSS…VAQA) and 1745–1760 (AAAA…PSGG). A helical membrane pass occupies residues 1731 to 1751 (IAAATAAAAVTLGAAAAAALA). Over residues 1776–1791 (GDRDRDRDRERERERS) the composition is skewed to basic and acidic residues. Residues 1800-1813 (NGNNSSNSANSNGP) show a composition bias toward low complexity. Gly residues-rich tracts occupy residues 1814–1828 (GSAG…GGSG) and 1835–1856 (PNSG…GGGP). Low complexity predominate over residues 1857–1884 (ALLNAGSNSNSGVGSGGAASSNSNSSVG). The segment covering 1885-1915 (GIVGSGGPGSNSQGSSGGGGGGPASGGGMGS) has biased composition (gly residues). A helical membrane pass occupies residues 1939–1959 (VAAAVAAQAILAASPLGAMES). Serine 1980 and serine 1988 each carry phosphoserine. Low complexity predominate over residues 1986–1997 (QSSPAQQSPQDR). Residues 1998-2017 (AAAKRAEQRRAEQERRRREA) are compositionally biased toward basic and acidic residues.

It localises to the membrane. Required maternally for proper expression of other homeotic genes involved in pattern formation, such as Ubx. This is Homeotic protein female sterile (fs(1)h) from Drosophila melanogaster (Fruit fly).